A 694-amino-acid chain; its full sequence is Type VI secretion system spike protein VgrG2 (694 aa).

This sequence belongs to the VgrG protein family.

Its subcellular location is the secreted. Its function is as follows. Part of the type VI secretion system specialized secretion system, which delivers several virulence factors in both prokaryotic and eukaryotic cells during infection. Forms the spike at the tip of the elongating tube formed by haemolysin co-regulated protein Hcp. Allows the delivery of the VasX antibacterial toxin to target cells where it exerts its toxicity. In Vibrio cholerae serotype O1 (strain ATCC 39315 / El Tor Inaba N16961), this protein is Type VI secretion system spike protein VgrG2 (vgrG2).